The primary structure comprises 97 residues: Large ribosomal subunit protein uL23 (97 aa).

It belongs to the universal ribosomal protein uL23 family. Part of the 50S ribosomal subunit. Contacts protein L29, and trigger factor when it is bound to the ribosome.

Functionally, one of the early assembly proteins it binds 23S rRNA. One of the proteins that surrounds the polypeptide exit tunnel on the outside of the ribosome. Forms the main docking site for trigger factor binding to the ribosome. The chain is Large ribosomal subunit protein uL23 from Rhizobium rhizogenes (strain K84 / ATCC BAA-868) (Agrobacterium radiobacter).